The sequence spans 149 residues: Putative pre-16S rRNA nuclease (149 aa).

It belongs to the YqgF nuclease family.

The protein resides in the cytoplasm. Functionally, could be a nuclease involved in processing of the 5'-end of pre-16S rRNA. The sequence is that of Putative pre-16S rRNA nuclease from Burkholderia orbicola (strain MC0-3).